We begin with the raw amino-acid sequence, 38 residues long: Lebetin-2-alpha (38 aa).

Positions Gly-1–Gly-38 are disordered. Cys-14 and Cys-30 are joined by a disulfide.

Belongs to the natriuretic peptide family. Expressed by the venom gland.

It is found in the secreted. Its function is as follows. Inhibits platelet aggregation induced by thrombin, collagen and PAF-acether. Human platelet aggregation induced by thrombin is inhibited by synthetic lebetin-1-alpha with (IC(50)=140 nM). In vivo, inhibits collagen-induced thrombocytopenia in rats. Is not toxic upon intravenous injection into mice and rats. Inhibits platelet aggregation induced by thrombin, collagen and PAF-acether. Human platelet aggregation induced by thrombin is inhibited by synthetic lebetin-1-beta with (IC(50)=32 nM). In vivo, inhibits collagen-induced thrombocytopenia in rats. Is not toxic upon intravenous injection into mice and rats. Functionally, inhibits platelet aggregation induced by thrombin, collagen and PAF-acether. Human platelet aggregation induced by thrombin is inhibited by synthetic lebetin-1-gamma with (IC(50)=5 nM). In vivo, inhibits collagen-induced thrombocytopenia in rats. Is not toxic upon intravenous injection into mice and rats. In terms of biological role, inhibits platelet aggregation induced by thrombin, collagen and PAF-acether. Human platelet aggregation induced by thrombin is inhibited by synthetic lebetin-1-alpha with (IC(50)=2.5 nM). In vivo, inhibits collagen-induced thrombocytopenia in rats. Is not toxic upon intravenous injection into mice and rats. Its function is as follows. Inhibits platelet aggregation induced by thrombin, collagen and PAF-acether. Human platelet aggregation induced by thrombin is inhibited by synthetic lebetin-1-alpha with (IC(50)=2.8 nM). In vivo, inhibits collagen-induced thrombocytopenia in rats. Is not toxic upon intravenous injection into mice and rats. The protein is Lebetin-2-alpha of Macrovipera lebetinus (Levantine viper).